The sequence spans 467 residues: ATP-dependent protease ATPase subunit HslU (467 aa).

ATP is bound by residues Ile18, Gly60–Glu65, Asp280, Glu345, and Arg417.

Belongs to the ClpX chaperone family. HslU subfamily. In terms of assembly, a double ring-shaped homohexamer of HslV is capped on each side by a ring-shaped HslU homohexamer. The assembly of the HslU/HslV complex is dependent on binding of ATP.

It is found in the cytoplasm. Its function is as follows. ATPase subunit of a proteasome-like degradation complex; this subunit has chaperone activity. The binding of ATP and its subsequent hydrolysis by HslU are essential for unfolding of protein substrates subsequently hydrolyzed by HslV. HslU recognizes the N-terminal part of its protein substrates and unfolds these before they are guided to HslV for hydrolysis. This chain is ATP-dependent protease ATPase subunit HslU, found in Lactobacillus helveticus (strain DPC 4571).